Here is a 312-residue protein sequence, read N- to C-terminus: Phospholipid phosphatase 3 (312 aa).

Over 1–33 (MQSYKYDKAIVPESKNGGSPALNNNPRKGGSKR) the chain is Cytoplasmic. A Phosphoserine modification is found at Ser-19. The helical transmembrane segment at 34-54 (VLLICLDLFCLFMAALPFLII) threads the bilayer. Residues 55 to 85 (ETSTIKPYRRGFYCNDESIKYPLKVSETIND) lie on the Extracellular side of the membrane. Residues 86–106 (AVLCAVGIVIAILAIITGEFY) form a helical membrane-spanning segment. Over 107 to 123 (RIYYLKEKSRSTTQNPY) the chain is Cytoplasmic. The Dityrosine basolateral targeting motif motif lies at 109 to 110 (YY). A helical membrane pass occupies residues 124 to 144 (VAALYKQVGCFLFGCAISQSF). The Extracellular portion of the chain corresponds to 145–194 (TDIAKVSIGRLRPHFLSVCDPDFSQINCSEGYIQNYRCRGEDSKVQEARK). Residues 149-157 (KVSIGRLRP) are phosphatase sequence motif I. Asn-171 carries N-linked (GlcNAc...) asparagine glycosylation. Positions 183 to 185 (RGE) match the Integrin-binding motif motif. A helical membrane pass occupies residues 195–215 (SFFSGHASFSMFTMLYLVLYL). The phosphatase sequence motif II stretch occupies residues 197 to 200 (FSGH). Residue His-200 is the Proton donors of the active site. The Cytoplasmic segment spans residues 216–226 (QARFTWRGARL). The helical transmembrane segment at 227–244 (LRPLLQFTLLMMAFYTGL) threads the bilayer. The phosphatase sequence motif III stretch occupies residues 245–256 (SRVSDYKHHPSD). At 245–258 (SRVSDYKHHPSDVL) the chain is on the extracellular side. The Nucleophile role is filled by His-252. The chain crosses the membrane as a helical span at residues 259 to 279 (AGFAQGALVACCIVFFVSDLF). The segment at 276-312 (SDLFKTKTSLSLPAPAIRREILSPVDIIDRNNHHNMV) is mediates interaction with CTNND1. The Cytoplasmic portion of the chain corresponds to 280-312 (KTKTSLSLPAPAIRREILSPVDIIDRNNHHNMV).

This sequence belongs to the PA-phosphatase related phosphoesterase family. As to quaternary structure, forms functional homodimers and homooligomers that are not required for substrate recognition and catalytic activity. Can also form heterooligomers with other PLPP2 and PLPP3. Interacts with CTNND1; negatively regulates the PLPP3-mediated stabilization of beta-catenin/CTNNB1. N-glycosylated. Contains high-mannose oligosaccharides. In terms of tissue distribution, detected in lung, cerebellum and heart atrium.

It is found in the cell membrane. Its subcellular location is the basolateral cell membrane. The protein resides in the endoplasmic reticulum membrane. It localises to the endoplasmic reticulum-Golgi intermediate compartment membrane. The protein localises to the golgi apparatus membrane. It is found in the golgi apparatus. Its subcellular location is the trans-Golgi network membrane. The protein resides in the membrane raft. The catalysed reaction is a 1,2-diacyl-sn-glycero-3-phosphate + H2O = a 1,2-diacyl-sn-glycerol + phosphate. It catalyses the reaction 1,2-dihexadecanoyl-sn-glycero-3-phosphate + H2O = 1,2-dihexadecanoyl-sn-glycerol + phosphate. The enzyme catalyses 1,2-di-(9Z-octadecenoyl)-sn-glycero-3-phosphate + H2O = 1,2-di-(9Z-octadecenoyl)-sn-glycerol + phosphate. It carries out the reaction a monoacyl-sn-glycero-3-phosphate + H2O = a monoacylglycerol + phosphate. The catalysed reaction is (9Z)-octadecenoyl-sn-glycero-3-phosphate + H2O = (9Z-octadecenoyl)-glycerol + phosphate. It catalyses the reaction sphing-4-enine 1-phosphate + H2O = sphing-4-enine + phosphate. The enzyme catalyses an N-acylsphing-4-enine 1-phosphate + H2O = an N-acylsphing-4-enine + phosphate. It carries out the reaction N-(octanoyl)-sphing-4-enine-1-phosphate + H2O = N-octanoylsphing-4-enine + phosphate. The catalysed reaction is N-(9Z-octadecenoyl)-ethanolamine phosphate + H2O = N-(9Z-octadecenoyl) ethanolamine + phosphate. The protein operates within lipid metabolism; phospholipid metabolism. Its activity is regulated as follows. Magnesium-independent phospholipid phosphatase. Insensitive to N-ethylmaleimide. In terms of biological role, magnesium-independent phospholipid phosphatase of the plasma membrane that catalyzes the dephosphorylation of a variety of glycerolipid and sphingolipid phosphate esters including phosphatidate/PA, lysophosphatidate/LPA, diacylglycerol pyrophosphate/DGPP, sphingosine 1-phosphate/S1P and ceramide 1-phosphate/C1P. Also acts on N-oleoyl ethanolamine phosphate/N-(9Z-octadecenoyl)-ethanolamine phosphate, a potential physiological compound. Has both an extracellular and an intracellular phosphatase activity, allowing the hydrolysis and the cellular uptake of these bioactive lipid mediators from the milieu, regulating signal transduction in different cellular processes. Through the dephosphorylation of extracellular sphingosine-1-phosphate and the regulation of its extra- and intracellular availability, plays a role in vascular homeostasis, regulating endothelial cell migration, adhesion, survival, proliferation and the production of pro-inflammatory cytokines. By maintaining the appropriate levels of this lipid in the cerebellum, also ensure its proper development and function. Through its intracellular lipid phosphatase activity may act in early compartments of the secretory pathway, regulating the formation of Golgi to endoplasmic reticulum retrograde transport carriers. Functionally, independently of this phosphatase activity may also function in the Wnt signaling pathway and the stabilization of beta-catenin/CTNNB1, thereby regulating cell proliferation, migration and differentiation in angiogenesis or yet in tumor growth. Also plays a role in integrin-mediated cell-cell adhesion in angiogenesis. This chain is Phospholipid phosphatase 3, found in Mus musculus (Mouse).